A 377-amino-acid polypeptide reads, in one-letter code: Nitric oxide reductase FlRd-NAD(+) reductase (377 aa).

This sequence belongs to the FAD-dependent oxidoreductase family. Requires FAD as cofactor.

Its subcellular location is the cytoplasm. It carries out the reaction 2 reduced [nitric oxide reductase rubredoxin domain] + NAD(+) + H(+) = 2 oxidized [nitric oxide reductase rubredoxin domain] + NADH. It functions in the pathway nitrogen metabolism; nitric oxide reduction. Functionally, one of at least two accessory proteins for anaerobic nitric oxide (NO) reductase. Reduces the rubredoxin moiety of NO reductase. This chain is Nitric oxide reductase FlRd-NAD(+) reductase, found in Salmonella newport (strain SL254).